We begin with the raw amino-acid sequence, 558 residues long: Small ribosomal subunit protein bS1 (558 aa).

S1 motif domains follow at residues 21–87, 105–171, 192–260, 277–347, 364–434, and 451–520; these read GSII…LSRE, SETV…VSRR, GMHV…LGLK, ETKL…LGLK, GVHV…LGIK, and GAII…LTIH.

This sequence belongs to the bacterial ribosomal protein bS1 family.

Functionally, binds mRNA; thus facilitating recognition of the initiation point. It is needed to translate mRNA with a short Shine-Dalgarno (SD) purine-rich sequence. This Buchnera aphidicola subsp. Acyrthosiphon pisum (strain APS) (Acyrthosiphon pisum symbiotic bacterium) protein is Small ribosomal subunit protein bS1 (rpsA).